The primary structure comprises 1859 residues: DNA-directed RNA polymerase subunit beta'' (1859 aa).

4 residues coordinate Zn(2+): Cys286, Cys359, Cys366, and Cys369.

Belongs to the RNA polymerase beta' chain family. RpoC2 subfamily. In plastids the minimal PEP RNA polymerase catalytic core is composed of four subunits: alpha, beta, beta', and beta''. When a (nuclear-encoded) sigma factor is associated with the core the holoenzyme is formed, which can initiate transcription. Zn(2+) serves as cofactor.

It localises to the plastid. The protein resides in the chloroplast. The catalysed reaction is RNA(n) + a ribonucleoside 5'-triphosphate = RNA(n+1) + diphosphate. Functionally, DNA-dependent RNA polymerase catalyzes the transcription of DNA into RNA using the four ribonucleoside triphosphates as substrates. This chain is DNA-directed RNA polymerase subunit beta'', found in Oltmannsiellopsis viridis (Marine flagellate).